A 610-amino-acid chain; its full sequence is Granule-bound starch synthase 1, chloroplastic/amyloplastic (610 aa).

The N-terminal 79 residues, 1–79, are a transit peptide targeting the chloroplast; sequence MATVTASSNF…SKVKTAGKIV (79 aa). Residue K98 coordinates ADP-alpha-D-glucose. Residues 438-454 adopt a coiled-coil conformation; it reads TGKKKMEAQILELEEKF.

This sequence belongs to the glycosyltransferase 1 family. Bacterial/plant glycogen synthase subfamily. As to quaternary structure, interacts with PTST. This interaction is critical for the localization to starch granules. In terms of tissue distribution, expressed in roots, inflorescences, flowers, fruits and at much higher levels in leaves.

The protein resides in the plastid. It localises to the chloroplast. The catalysed reaction is an NDP-alpha-D-glucose + [(1-&gt;4)-alpha-D-glucosyl](n) = [(1-&gt;4)-alpha-D-glucosyl](n+1) + a ribonucleoside 5'-diphosphate + H(+). The protein operates within glycan biosynthesis; starch biosynthesis. Required for the synthesis of amylose. Destroyed as it is released from the starch granules during the night. The circadian expression is controlled by CCA1 and LHY transcription factors. The chain is Granule-bound starch synthase 1, chloroplastic/amyloplastic from Arabidopsis thaliana (Mouse-ear cress).